The primary structure comprises 100 residues: Replication restart protein PriB (100 aa).

The region spanning 1–99 (MGFNNLVSLA…LRIQNIKEYK (99 aa)) is the SSB domain.

It belongs to the PriB family. As to quaternary structure, homodimer. Interacts with PriA and DnaT. Component of the replication restart primosome. Primosome assembly occurs via a 'hand-off' mechanism. PriA binds to replication forks, subsequently PriB then DnaT bind; DnaT then displaces ssDNA to generate the helicase loading substrate.

Involved in the restart of stalled replication forks, which reloads the replicative helicase on sites other than the origin of replication; the PriA-PriB pathway is the major replication restart pathway. During primosome assembly it facilitates complex formation between PriA and DnaT on DNA; stabilizes PriA on DNA. Stimulates the DNA unwinding activity of PriA helicase. The polypeptide is Replication restart protein PriB (Neisseria meningitidis serogroup C (strain 053442)).